A 265-amino-acid polypeptide reads, in one-letter code: Undecaprenyl-diphosphatase (265 aa).

A run of 7 helical transmembrane segments spans residues 42–62 (EAIPISIWLHLGTLLAAIVYF), 90–110 (ISFLLISTALTGIVGLPLLLF), 115–135 (VEISGGSATAVIGIMLIVTGI), 160–182 (VAQGFAAIPGISRSGITMSALLL), 195–215 (FLMSIPAVLVAEIGVGLMGMV), 222–242 (IVGLFFAFAFGLVTIDLFLKV), and 245–265 (KVDFSYFCIGLGVLSVLTMFL).

Belongs to the UppP family.

The protein resides in the cell membrane. The catalysed reaction is di-trans,octa-cis-undecaprenyl diphosphate + H2O = di-trans,octa-cis-undecaprenyl phosphate + phosphate + H(+). Catalyzes the dephosphorylation of undecaprenyl diphosphate (UPP). The chain is Undecaprenyl-diphosphatase from Methanococcoides burtonii (strain DSM 6242 / NBRC 107633 / OCM 468 / ACE-M).